The chain runs to 192 residues: uncharacterized protein (192 aa).

The disordered stretch occupies residues Pro-168–Ala-192. Over residues Thr-182 to Ala-192 the composition is skewed to polar residues.

This sequence to A.xylinum IS1268 ORFA.

This is an uncharacterized protein from Sinorhizobium fredii (strain NBRC 101917 / NGR234).